Consider the following 505-residue polypeptide: Maturase K (505 aa).

Belongs to the intron maturase 2 family. MatK subfamily.

It localises to the plastid. The protein resides in the chloroplast. In terms of biological role, usually encoded in the trnK tRNA gene intron. Probably assists in splicing its own and other chloroplast group II introns. This is Maturase K from Froelichia floridana (Florida snake-cotton).